A 129-amino-acid chain; its full sequence is M-zodatoxin-Lt8j (129 aa).

The N-terminal stretch at 1-20 (MKYFVVALALVAAFACIAES) is a signal peptide. A propeptide spanning residues 21–60 (KPAESEHELAEVEEENELADLEDAVWLEHLADLSDLEEAR) is cleaved from the precursor.

This sequence belongs to the cationic peptide 06 (cytoinsectotoxin) family. Expressed by the venom gland.

Its subcellular location is the secreted. Insecticidal, cytolytic and antimicrobial peptide. Forms voltage-dependent, ion-permeable channels in membranes. At high concentration causes cell membrane lysis. The sequence is that of M-zodatoxin-Lt8j (cit 1-9) from Lachesana tarabaevi (Spider).